Here is a 179-residue protein sequence, read N- to C-terminus: Repressor of phase 1 flagellin gene (179 aa).

In terms of biological role, transcriptional repressor of the FliC phase-1 flagellin. The polypeptide is Repressor of phase 1 flagellin gene (fljA) (Salmonella abortus-equi).